Consider the following 940-residue polypeptide: Isoleucine--tRNA ligase (940 aa).

Residues 58–68 (PYANGSIHIGH) carry the 'HIGH' region motif. Position 564 (glutamate 564) interacts with L-isoleucyl-5'-AMP. Residues 605–609 (KMSKS) carry the 'KMSKS' region motif. Lysine 608 is an ATP binding site. 4 residues coordinate Zn(2+): cysteine 903, cysteine 906, cysteine 923, and cysteine 926.

This sequence belongs to the class-I aminoacyl-tRNA synthetase family. IleS type 1 subfamily. Monomer. Requires Zn(2+) as cofactor.

Its subcellular location is the cytoplasm. It catalyses the reaction tRNA(Ile) + L-isoleucine + ATP = L-isoleucyl-tRNA(Ile) + AMP + diphosphate. In terms of biological role, catalyzes the attachment of isoleucine to tRNA(Ile). As IleRS can inadvertently accommodate and process structurally similar amino acids such as valine, to avoid such errors it has two additional distinct tRNA(Ile)-dependent editing activities. One activity is designated as 'pretransfer' editing and involves the hydrolysis of activated Val-AMP. The other activity is designated 'posttransfer' editing and involves deacylation of mischarged Val-tRNA(Ile). This is Isoleucine--tRNA ligase from Shewanella baltica (strain OS195).